Reading from the N-terminus, the 384-residue chain is DNA dC-&gt;dU-editing enzyme APOBEC-3G (384 aa).

The interval Met-1 to Ser-60 is essential for cytoplasmic localization. A CMP/dCMP-type deaminase 1 domain is found at Arg-29–Leu-138. Thr-32 carries the post-translational modification Phosphothreonine; by PKA. Residues Lys-42, Lys-52, and Lys-63 each participate in a (Microbial infection) Glycyl lysine isopeptide (Lys-Gly) (interchain with G-Cter in ubiquitin) cross-link. The Zn(2+) site is built by His-65, Cys-97, and Cys-100. Residues Lys-150 and Lys-163 each participate in a (Microbial infection) Glycyl lysine isopeptide (Lys-Gly) (interchain with G-Cter in ubiquitin) cross-link. The tract at residues Glu-209–Ser-336 is necessary for homooligomerization. An interaction with DNA region spans residues Arg-213–Arg-215. Residues Gly-214–Leu-328 enclose the CMP/dCMP-type deaminase 2 domain. The residue at position 218 (Thr-218) is a Phosphothreonine; by PKA and CAMK2. A (Microbial infection) Glycyl lysine isopeptide (Lys-Gly) (interchain with G-Cter in ubiquitin) cross-link involves residue Lys-249. Residue His-257 coordinates Zn(2+). The Proton donor role is filled by Glu-259. Lys-270 is covalently cross-linked ((Microbial infection) Glycyl lysine isopeptide (Lys-Gly) (interchain with G-Cter in ubiquitin)). Zn(2+) contacts are provided by Cys-288 and Cys-291. (Microbial infection) Glycyl lysine isopeptide (Lys-Gly) (interchain with G-Cter in ubiquitin) cross-links involve residues Lys-297, Lys-301, and Lys-303. The interaction with DNA stretch occupies residues Arg-313 to Arg-320. Residue Lys-334 forms a (Microbial infection) Glycyl lysine isopeptide (Lys-Gly) (interchain with G-Cter in ubiquitin) linkage.

It belongs to the cytidine and deoxycytidylate deaminase family. In terms of assembly, homodimer. Homooligomer. Can bind RNA to form ribonucleoprotein complexes of high-molecular-mass (HMM) or low-molecular-mass (LMM). HMM is inactive and heterogeneous in protein composition because of binding nonselectively to cellular RNAs, which in turn are associated with variety of cellular proteins. The LMM form which is enzymatically active has few or no RNAs associated. Its ability to form homooligomer is distinct from its ability to assemble into HMM. Interacts with APOBEC3B, APOBEC3F, MOV10, AGO2, EIF4E, EIF4ENIF1, DCP2 and DDX6 in an RNA-dependent manner. Interacts with AGO1, AGO3 and PKA/PRKACA. As to quaternary structure, (Microbial infection) Interacts with HIV-1 Vif; promoting its ubiquitination by a cullin-5-RING E3 ubiquitin-protein ligase complex (ECS complex) hijacked by the HIV-1 Vif. (Microbial infection) Interacts with HIV-1 reverse transcriptase/ribonuclease H. In terms of assembly, (Microbial infection) Interacts with hepatitis B virus capsid protein. It depends on Zn(2+) as a cofactor. In terms of processing, (Microbial infection) Following infection by HIV-1, ubiquitinated by a cullin-5-RING E3 ubiquitin-protein ligase complex (ECS complex) hijacked by the HIV-1 Vif protein, leading to its degradation. Deubiquitinated by USP49; leading to stabilization. Phosphorylation at Thr-32 reduces its binding to HIV-1 Vif and subsequent ubiquitination and degradation thus promoting its antiviral activity. As to expression, expressed in spleen, testes, ovary and peripheral blood leukocytes and CD4+ lymphocytes. Also expressed in non-permissive peripheral blood mononuclear cells, and several tumor cell lines; no expression detected in permissive lymphoid and non-lymphoid cell lines. Exists only in the LMM form in peripheral blood-derived resting CD4 T-cells and monocytes, both of which are refractory to HIV-1 infection. LMM is converted to a HMM complex when resting CD4 T-cells are activated or when monocytes are induced to differentiate into macrophages. This change correlates with increased susceptibility of these cells to HIV-1 infection.

The protein resides in the cytoplasm. It localises to the nucleus. It is found in the P-body. It carries out the reaction a 2'-deoxycytidine in single-stranded DNA + H2O + H(+) = a 2'-deoxyuridine in single-stranded DNA + NH4(+). With respect to regulation, (Microbial infection) Antiviral activity is neutralized by the HIV-1 virion infectivity factor (Vif), that prevents its incorporation into progeny virions by both inhibiting its translation and/or by inducing its ubiquitination and subsequent degradation by the 26S proteasome. Can also be neutralized by simian immunodeficiency virus sooty mangabey monkey virus (SIV-sm) and chimpanzee immunodeficiency virus (SIV-cpz) Vif. In terms of biological role, DNA deaminase (cytidine deaminase) which acts as an inhibitor of retrovirus replication and retrotransposon mobility via deaminase-dependent and -independent mechanisms. Exhibits potent antiviral activity against Vif-deficient HIV-1. After the penetration of retroviral nucleocapsids into target cells of infection and the initiation of reverse transcription, it can induce the conversion of cytosine to uracil in the minus-sense single-strand viral DNA, leading to G-to-A hypermutations in the subsequent plus-strand viral DNA. The resultant detrimental levels of mutations in the proviral genome, along with a deamination-independent mechanism that works prior to the proviral integration, together exert efficient antiretroviral effects in infected target cells. Selectively targets single-stranded DNA and does not deaminate double-stranded DNA or single- or double-stranded RNA. Exhibits antiviral activity also against simian immunodeficiency viruses (SIVs), hepatitis B virus (HBV), equine infectious anemia virus (EIAV), xenotropic MuLV-related virus (XMRV) and simian foamy virus (SFV). May inhibit the mobility of LTR and non-LTR retrotransposons. This is DNA dC-&gt;dU-editing enzyme APOBEC-3G from Homo sapiens (Human).